A 274-amino-acid chain; its full sequence is Cytochrome b-c1 complex subunit Rieske, mitochondrial (274 aa).

Residues serine 79–serine 103 are Mitochondrial matrix-facing. A helical transmembrane segment spans residues arginine 104–methionine 140. Residues serine 141–glycine 274 are Mitochondrial intermembrane-facing. A Rieske domain is found at glutamate 187–valine 272. Cysteine 217, histidine 219, cysteine 236, histidine 239, and serine 241 together coordinate [2Fe-2S] cluster. An intrachain disulfide couples cysteine 222 to cysteine 238.

Belongs to the Rieske iron-sulfur protein family. Component of the ubiquinol-cytochrome c oxidoreductase (cytochrome b-c1 complex, complex III, CIII), a multisubunit enzyme composed of 11 subunits. The complex is composed of 3 respiratory subunits cytochrome b, cytochrome c1 and Rieske protein UQCRFS1, 2 core protein subunits UQCRC1/QCR1 and UQCRC2/QCR2, and 6 low-molecular weight protein subunits UQCRH/QCR6, UQCRB/QCR7, UQCRQ/QCR8, UQCR10/QCR9, UQCR11/QCR10 and subunit 9, the cleavage product of Rieske protein UQCRFS1. The complex exists as an obligatory dimer and forms supercomplexes (SCs) in the inner mitochondrial membrane with NADH-ubiquinone oxidoreductase (complex I, CI) and cytochrome c oxidase (complex IV, CIV), resulting in different assemblies (supercomplex SCI(1)III(2)IV(1) and megacomplex MCI(2)III(2)IV(2)). Incorporation of the Rieske protein UQCRFS1 is the penultimate step in complex III assembly. Interacts with TTC19, which is involved in the clearance of UQCRFS1 fragments. In terms of assembly, component of the ubiquinol-cytochrome c oxidoreductase (cytochrome b-c1 complex, complex III, CIII). Subunit 9 corresponds to the mitochondrial targeting sequence (MTS) of Rieske protein UQCRFS1. It is retained after processing and incorporated inside complex III, where it remains bound to the complex and localizes between the 2 core subunits UQCRC1/QCR1 and UQCRC2/QCR2. Requires [2Fe-2S] cluster as cofactor. In terms of processing, proteolytic processing is necessary for the correct insertion of UQCRFS1 in the complex III dimer. Several fragments are generated during UQCRFS1 insertion, most probably due to the endogenous matrix-processing peptidase (MPP) activity of the 2 core protein subunits UQCRC1/QCR1 and UQCRC2/QCR2, which are homologous to the 2 mitochondrial-processing peptidase (MPP) subunits beta-MPP and alpha-MPP respectively. The action of the protease is also necessary for the clearance of the UQCRFS1 fragments.

It localises to the mitochondrion inner membrane. The catalysed reaction is a quinol + 2 Fe(III)-[cytochrome c](out) = a quinone + 2 Fe(II)-[cytochrome c](out) + 2 H(+)(out). Component of the ubiquinol-cytochrome c oxidoreductase, a multisubunit transmembrane complex that is part of the mitochondrial electron transport chain which drives oxidative phosphorylation. The respiratory chain contains 3 multisubunit complexes succinate dehydrogenase (complex II, CII), ubiquinol-cytochrome c oxidoreductase (cytochrome b-c1 complex, complex III, CIII) and cytochrome c oxidase (complex IV, CIV), that cooperate to transfer electrons derived from NADH and succinate to molecular oxygen, creating an electrochemical gradient over the inner membrane that drives transmembrane transport and the ATP synthase. The cytochrome b-c1 complex catalyzes electron transfer from ubiquinol to cytochrome c, linking this redox reaction to translocation of protons across the mitochondrial inner membrane, with protons being carried across the membrane as hydrogens on the quinol. In the process called Q cycle, 2 protons are consumed from the matrix, 4 protons are released into the intermembrane space and 2 electrons are passed to cytochrome c. The Rieske protein is a catalytic core subunit containing a [2Fe-2S] iron-sulfur cluster. It cycles between 2 conformational states during catalysis to transfer electrons from the quinol bound in the Q(0) site in cytochrome b to cytochrome c1. Incorporation of UQCRFS1 is the penultimate step in complex III assembly. In terms of biological role, component of the ubiquinol-cytochrome c oxidoreductase (cytochrome b-c1 complex, complex III, CIII). UQCRFS1 undergoes proteolytic processing once it is incorporated in the complex III dimer. One of the fragments, called subunit 9, corresponds to its mitochondrial targeting sequence (MTS). The proteolytic processing is necessary for the correct insertion of UQCRFS1 in the complex III dimer, but the persistence of UQCRFS1-derived fragments may prevent newly imported UQCRFS1 to be processed and assembled into complex III and is detrimental for the complex III structure and function. This is Cytochrome b-c1 complex subunit Rieske, mitochondrial (UQCRFS1) from Colobus polykomos (Western black-and-white colobus monkey).